The chain runs to 309 residues: Probable MRF1 mitochondrial N(5)-glutamine methyltransferase mtq1 (309 aa).

S-adenosyl-L-methionine-binding positions include Cys124 to Gly128, Asp148, and Asn200. Asn200–Tyr203 serves as a coordination point for substrate.

The protein belongs to the protein N5-glutamine methyltransferase family.

Its subcellular location is the mitochondrion. The enzyme catalyses L-glutaminyl-[peptide chain release factor] + S-adenosyl-L-methionine = N(5)-methyl-L-glutaminyl-[peptide chain release factor] + S-adenosyl-L-homocysteine + H(+). Its function is as follows. Methylates MRF1 on 'Gln-270' using S-adenosyl L-methionine as methyl donor. The protein is Probable MRF1 mitochondrial N(5)-glutamine methyltransferase mtq1 (mtq1) of Schizosaccharomyces pombe (strain 972 / ATCC 24843) (Fission yeast).